Here is a 156-residue protein sequence, read N- to C-terminus: Small ribosomal subunit protein uS7 (156 aa).

This sequence belongs to the universal ribosomal protein uS7 family. In terms of assembly, part of the 30S ribosomal subunit. Contacts proteins S9 and S11.

In terms of biological role, one of the primary rRNA binding proteins, it binds directly to 16S rRNA where it nucleates assembly of the head domain of the 30S subunit. Is located at the subunit interface close to the decoding center, probably blocks exit of the E-site tRNA. This chain is Small ribosomal subunit protein uS7, found in Anaeromyxobacter dehalogenans (strain 2CP-C).